Here is a 334-residue protein sequence, read N- to C-terminus: Dihydroorotate dehydrogenase (quinone) (334 aa).

Residues Ala-61–Lys-65 and Thr-85 contribute to the FMN site. Lys-65 serves as a coordination point for substrate. A substrate-binding site is contributed by Asn-110–Phe-114. Residues Asn-138 and Asn-171 each contribute to the FMN site. Substrate is bound at residue Asn-171. Ser-174 acts as the Nucleophile in catalysis. A substrate-binding site is contributed by Asn-176. The FMN site is built by Lys-216 and Thr-244. Asn-245–Thr-246 is a binding site for substrate. FMN-binding positions include Gly-266, Gly-295, and Tyr-316 to Thr-317.

It belongs to the dihydroorotate dehydrogenase family. Type 2 subfamily. As to quaternary structure, monomer. Requires FMN as cofactor.

The protein localises to the cell membrane. The catalysed reaction is (S)-dihydroorotate + a quinone = orotate + a quinol. It functions in the pathway pyrimidine metabolism; UMP biosynthesis via de novo pathway; orotate from (S)-dihydroorotate (quinone route): step 1/1. Its function is as follows. Catalyzes the conversion of dihydroorotate to orotate with quinone as electron acceptor. In Idiomarina loihiensis (strain ATCC BAA-735 / DSM 15497 / L2-TR), this protein is Dihydroorotate dehydrogenase (quinone).